The sequence spans 508 residues: Maturase K (508 aa).

It belongs to the intron maturase 2 family. MatK subfamily.

The protein resides in the plastid. It localises to the chloroplast. Its function is as follows. Usually encoded in the trnK tRNA gene intron. Probably assists in splicing its own and other chloroplast group II introns. The sequence is that of Maturase K from Abies bracteata (Bristle-cone fir).